The following is a 266-amino-acid chain: Interleukin-1 beta (266 aa).

The propeptide occupies 1–113 (MATVPEPINE…ETSSDEFLCD (113 aa)).

Belongs to the IL-1 family. In terms of assembly, monomer. In its precursor form, weakly interacts with full-length MEFV; the mature cytokine does not interact at all. Interacts with integrins ITGAV:ITGBV and ITGA5:ITGB1; integrin-binding is required for IL1B signaling. Interacts with cargo receptor TMED10; the interaction is direct and is required for the secretion of IL1B mature form. Interacts with HSP90AB1; the interaction facilitates cargo translocation into the ERGIC. Interacts with HSP90B1; the interaction facilitates cargo translocation into the ERGIC.

The protein localises to the cytoplasm. It is found in the cytosol. It localises to the secreted. Its subcellular location is the lysosome. The protein resides in the extracellular exosome. Its function is as follows. Potent pro-inflammatory cytokine. Initially discovered as the major endogenous pyrogen, induces prostaglandin synthesis, neutrophil influx and activation, T-cell activation and cytokine production, B-cell activation and antibody production, and fibroblast proliferation and collagen production. Promotes Th17 differentiation of T-cells. Synergizes with IL12/interleukin-12 to induce IFNG synthesis from T-helper 1 (Th1) cells. Plays a role in angiogenesis by inducing VEGF production synergistically with TNF and IL6. Involved in transduction of inflammation downstream of pyroptosis: its mature form is specifically released in the extracellular milieu by passing through the gasdermin-D (GSDMD) pore. This chain is Interleukin-1 beta (IL1B), found in Bubalus carabanensis (Swamp type water buffalo).